Here is a 303-residue protein sequence, read N- to C-terminus: Protein transport protein SEC13-2 (303 aa).

WD repeat units follow at residues 7–46 (AHEG…NSSS), 53–95 (GHEG…GKMQ), 102–143 (VHSA…IAST), 149–202 (AHKF…ETYV), 209–251 (GHKD…KKND), and 261–300 (KFEQ…KWEE).

This sequence belongs to the WD repeat SEC13 family. In terms of assembly, the COPII coat is composed of at least 5 proteins: the SEC23/24 complex, the SEC13/31 complex, and the protein SAR1. Component of the nuclear pore complex (NPC). NPC constitutes the exclusive means of nucleocytoplasmic transport. NPCs allow the passive diffusion of ions and small molecules and the active, nuclear transport receptor-mediated bidirectional transport of macromolecules such as proteins, RNAs, ribonucleoparticles (RNPs), and ribosomal subunits across the nuclear envelope. Due to its 8-fold rotational symmetry, all subunits are present with 8 copies or multiples thereof.

The protein resides in the cytoplasmic vesicle. It localises to the COPII-coated vesicle membrane. It is found in the endoplasmic reticulum membrane. Its subcellular location is the nucleus. The protein localises to the nuclear pore complex. Component of the coat protein complex II (COPII) which promotes the formation of transport vesicles from the endoplasmic reticulum (ER). The coat has two main functions, the physical deformation of the endoplasmic reticulum membrane into vesicles and the selection of cargo molecules. It also functions as a component of the nuclear pore complex (NPC). NPC components, collectively referred to as nucleoporins (NUPs), can play the role of both NPC structural components and of docking or interaction partners for transiently associated nuclear transport factors. SEC13 is required for efficient mRNA export from the nucleus to the cytoplasm and for correct nuclear pore biogenesis and distribution. This chain is Protein transport protein SEC13-2 (SEC132), found in Candida glabrata (strain ATCC 2001 / BCRC 20586 / JCM 3761 / NBRC 0622 / NRRL Y-65 / CBS 138) (Yeast).